The primary structure comprises 303 residues: UDP-N-acetylenolpyruvoylglucosamine reductase (303 aa).

An FAD-binding PCMH-type domain is found at lysine 29–lysine 196. Residue arginine 174 is part of the active site. Residue serine 225 is the Proton donor of the active site. The active site involves glutamate 295.

It belongs to the MurB family. FAD serves as cofactor.

It is found in the cytoplasm. The enzyme catalyses UDP-N-acetyl-alpha-D-muramate + NADP(+) = UDP-N-acetyl-3-O-(1-carboxyvinyl)-alpha-D-glucosamine + NADPH + H(+). Its pathway is cell wall biogenesis; peptidoglycan biosynthesis. Functionally, cell wall formation. This Bacillus licheniformis (strain ATCC 14580 / DSM 13 / JCM 2505 / CCUG 7422 / NBRC 12200 / NCIMB 9375 / NCTC 10341 / NRRL NRS-1264 / Gibson 46) protein is UDP-N-acetylenolpyruvoylglucosamine reductase.